A 338-amino-acid polypeptide reads, in one-letter code: Methionine import ATP-binding protein MetN 1 (338 aa).

The region spanning 2–241 (IEVRSVTKRF…PHSELGVGLL (240 aa)) is the ABC transporter domain. Residue 38-45 (GQSGAGKT) participates in ATP binding.

The protein belongs to the ABC transporter superfamily. Methionine importer (TC 3.A.1.24) family. The complex is composed of two ATP-binding proteins (MetN), two transmembrane proteins (MetI) and a solute-binding protein (MetQ).

It is found in the cell membrane. The catalysed reaction is L-methionine(out) + ATP + H2O = L-methionine(in) + ADP + phosphate + H(+). The enzyme catalyses D-methionine(out) + ATP + H2O = D-methionine(in) + ADP + phosphate + H(+). Functionally, part of the ABC transporter complex MetNIQ involved in methionine import. Responsible for energy coupling to the transport system. The chain is Methionine import ATP-binding protein MetN 1 from Rhodococcus jostii (strain RHA1).